A 165-amino-acid polypeptide reads, in one-letter code: UPF0303 protein ACP_1015 (165 aa).

It belongs to the UPF0303 family.

This Acidobacterium capsulatum (strain ATCC 51196 / DSM 11244 / BCRC 80197 / JCM 7670 / NBRC 15755 / NCIMB 13165 / 161) protein is UPF0303 protein ACP_1015.